The following is a 441-amino-acid chain: MDTFLYTSESVNEGHPDKLCDQISDAVLDACLEQDPDSKVACETCSKTNMVMVFGEITTKANVDYEKIVHKTCRDIGFVSDDVGLDADNCKVLVQIEQQSPDIAQGVHGHLTKRPEDIGAGDQGHMFGYATDETPELMPLSHVLATKLGAKLTEVRKNGTCPWLRPDGKTQVTVEYYNDKGAMVPIRVHTVLISTQHDETVTNDEIAADLKEHVIKPIIPAKYLDEKTIFHLNPSGRFVIGGPHGDAGLTGRKIIIDTYGGWGAHGGGAFSGKDPTKVDRSGAYIVRQAAKSIVASGLARRCIVQVSYAIGVPEPLSVFVDSYGTGKIPDREILQIVKETFDFRPGMISINLDLKRGGNGRFLKTAAYGHFGTGKIPDREILKIVKETFDFRPGMISINLDLKRGGNGRFLKTAAYGHFGRDDPDFTWEVVKPLKWEKPQA.

Glu-9 is a Mg(2+) binding site. His-15 is an ATP binding site. K(+) is bound at residue Glu-43. 2 residues coordinate L-methionine: Glu-56 and Gln-99. ATP-binding positions include 167 to 169, 235 to 238, Asp-246, 252 to 253, Ala-269, Lys-273, and Lys-277; these read DGK, SGRF, and RK. Asp-246 is an L-methionine binding site. Position 277 (Lys-277) interacts with L-methionine.

It belongs to the AdoMet synthase family. Homotetramer. The cofactor is Mn(2+). Mg(2+) serves as cofactor. Co(2+) is required as a cofactor. It depends on K(+) as a cofactor.

It localises to the cytoplasm. The catalysed reaction is L-methionine + ATP + H2O = S-adenosyl-L-methionine + phosphate + diphosphate. It functions in the pathway amino-acid biosynthesis; S-adenosyl-L-methionine biosynthesis; S-adenosyl-L-methionine from L-methionine: step 1/1. In terms of biological role, catalyzes the formation of S-adenosylmethionine from methionine and ATP. The reaction comprises two steps that are both catalyzed by the same enzyme: formation of S-adenosylmethionine (AdoMet) and triphosphate, and subsequent hydrolysis of the triphosphate. The chain is S-adenosylmethionine synthase 1 (SAMS1) from Daucus carota (Wild carrot).